The primary structure comprises 282 residues: Bis(5'-nucleosyl)-tetraphosphatase, symmetrical (282 aa).

Belongs to the Ap4A hydrolase family.

The catalysed reaction is P(1),P(4)-bis(5'-adenosyl) tetraphosphate + H2O = 2 ADP + 2 H(+). Hydrolyzes diadenosine 5',5'''-P1,P4-tetraphosphate to yield ADP. This is Bis(5'-nucleosyl)-tetraphosphatase, symmetrical from Paraburkholderia phymatum (strain DSM 17167 / CIP 108236 / LMG 21445 / STM815) (Burkholderia phymatum).